Here is an 84-residue protein sequence, read N- to C-terminus: uncharacterized protein (84 aa).

A compositionally biased stretch (low complexity) spans 34–54; that stretch reads ATSTASSSAAKNTTSSSKNAA. Positions 34–57 are disordered; it reads ATSTASSSAAKNTTSSSKNAAPGM. Asn-45 is a glycosylation site (N-linked (GlcNAc...) asparagine). The chain crosses the membrane as a helical span at residues 66–83; that stretch reads YGIIMAAFAAVSFVLGTG.

The protein localises to the endoplasmic reticulum membrane. This is an uncharacterized protein from Saccharomyces cerevisiae (strain ATCC 204508 / S288c) (Baker's yeast).